The chain runs to 135 residues: Small ribosomal subunit protein uS12 (135 aa).

Residues 1-23 (MPTINQLVRKGRHSKTTKSDSPA) form a disordered region. The residue at position 102 (Asp102) is a 3-methylthioaspartic acid.

Belongs to the universal ribosomal protein uS12 family. Part of the 30S ribosomal subunit. Contacts proteins S8 and S17. May interact with IF1 in the 30S initiation complex.

With S4 and S5 plays an important role in translational accuracy. Functionally, interacts with and stabilizes bases of the 16S rRNA that are involved in tRNA selection in the A site and with the mRNA backbone. Located at the interface of the 30S and 50S subunits, it traverses the body of the 30S subunit contacting proteins on the other side and probably holding the rRNA structure together. The combined cluster of proteins S8, S12 and S17 appears to hold together the shoulder and platform of the 30S subunit. This chain is Small ribosomal subunit protein uS12, found in Lactobacillus gasseri (strain ATCC 33323 / DSM 20243 / BCRC 14619 / CIP 102991 / JCM 1131 / KCTC 3163 / NCIMB 11718 / NCTC 13722 / AM63).